A 143-amino-acid chain; its full sequence is uncharacterized protein (143 aa).

It localises to the cytoplasm. Its subcellular location is the nucleus. This is an uncharacterized protein from Schizosaccharomyces pombe (strain 972 / ATCC 24843) (Fission yeast).